Here is a 166-residue protein sequence, read N- to C-terminus: MIYIDNRQNKIKVNEELENKIKEIIDYALKEEKVNIDYEISVVFIDNNSIKEINKDYRNIDKATDVLSFPMLDYEDGEVFKDIYLNYEFDESDLDEGNLVLGDIALSLEKAEEQSKEFGHSFLRETCYLTIHSVLHLLGYDHMEEDEKVIMRQREEEILKSFNLHR.

Residues histidine 132, histidine 136, and histidine 142 each contribute to the Zn(2+) site.

Belongs to the endoribonuclease YbeY family. The cofactor is Zn(2+).

It localises to the cytoplasm. In terms of biological role, single strand-specific metallo-endoribonuclease involved in late-stage 70S ribosome quality control and in maturation of the 3' terminus of the 16S rRNA. The sequence is that of Endoribonuclease YbeY from Clostridium botulinum (strain ATCC 19397 / Type A).